The following is a 362-amino-acid chain: Outer mitochondrial transmembrane helix translocase (362 aa).

Residues 1 to 19 (MVLKEIPTENITRPLGRNE) are Mitochondrial intermembrane-facing. The chain crosses the membrane as a helical span at residues 20–42 (VIGLLFRLTIFGAVTYFTIKWMV). Residues 43–362 (DAIDPTRKQK…HEAFMQVPLD (320 aa)) lie on the Cytoplasmic side of the membrane. ATP is bound at residue 137 to 144 (GPPGCGKT).

Belongs to the AAA ATPase family. MSP1 subfamily.

The protein resides in the mitochondrion outer membrane. Its subcellular location is the peroxisome membrane. The protein localises to the postsynaptic cell membrane. It catalyses the reaction [protein]-with a C-terminal TM segment(out) + ATP + H2O = [protein]-with a C-terminal TM segment(in) + ADP + phosphate + H(+). Outer mitochondrial translocase required to remove mislocalized tail-anchored transmembrane proteins on mitochondria. Specifically recognizes and binds tail-anchored transmembrane proteins: acts as a dislocase that mediates the ATP-dependent extraction of mistargeted tail-anchored transmembrane proteins from the mitochondrion outer membrane. Also plays a critical role in regulating the surface expression of AMPA receptors (AMPAR), thereby regulating synaptic plasticity and learning and memory. The sequence is that of Outer mitochondrial transmembrane helix translocase from Danio rerio (Zebrafish).